We begin with the raw amino-acid sequence, 365 residues long: Cytochrome P450 71A3 (365 aa).

Belongs to the cytochrome P450 family. Heme serves as cofactor.

In terms of biological role, may have a role in maturation, such as during flavor formation or other metabolite production specific to aging tissues. The sequence is that of Cytochrome P450 71A3 (CYP71A3) from Solanum melongena (Eggplant).